We begin with the raw amino-acid sequence, 337 residues long: Protein RETICULATA-RELATED 3, chloroplastic (337 aa).

A chloroplast-targeting transit peptide spans 1 to 59 (MAAMAAKLQLSAKSDQSSVRLPRVINLSRDPTTRVSFPRNGSVCSLHTNFSSPHLAKPC). Residues 70–89 (NNGGGSGSGGGGGGFGGSGG) are compositionally biased toward gly residues. Residues 70–96 (NNGGGSGSGGGGGGFGGSGGEASEESS) form a disordered region. The next 2 membrane-spanning stretches (helical) occupy residues 151 to 171 (FVFS…YMLA) and 216 to 236 (VFAS…NGLI).

It belongs to the RETICULATA family. Expressed in root meristem, root vasculature, distal region of young leaf primordia, leaf bundle sheath cells, hydathodes and pollen grains.

The protein localises to the plastid. It localises to the chloroplast membrane. Its function is as follows. May play a role in leaf development. Required for leaf mesophyll cell division in the early stages of leaf organogenesis. This Arabidopsis thaliana (Mouse-ear cress) protein is Protein RETICULATA-RELATED 3, chloroplastic.